The following is a 956-amino-acid chain: Calsyntenin-3 (956 aa).

The N-terminal stretch at 1-20 (MARMSFLSFLLFCLTSVAHG) is a signal peptide. Topologically, residues 21–850 (NKANKHKPWI…PHRNSVVPGA (830 aa)) are extracellular. Cadherin domains follow at residues 30-151 (IETE…SPVF) and 152-271 (VERR…IPLF). Asparagine 333, asparagine 353, asparagine 513, and asparagine 743 each carry an N-linked (GlcNAc...) asparagine glycan. The helical transmembrane segment at 851–871 (ATVIIMVCVGFLVVMVILGVF) threads the bilayer. At 872-956 (RIRSIHRRGE…EGRDSAPRRY (85 aa)) the chain is on the cytoplasmic side. The segment covering 921-937 (GECEDEEEVVDSPDDTS) has biased composition (acidic residues). The disordered stretch occupies residues 921-956 (GECEDEEEVVDSPDDTSDDQRIIIKKEGRDSAPRRY). Basic and acidic residues predominate over residues 938-956 (DDQRIIIKKEGRDSAPRRY).

The protein belongs to the calsyntenin family. In terms of assembly, homooligomer and heterooligomer; mediates both homophilic and heterophilc interactions with clstn1 and clstn2 paralogs via cadherin domains. Interacts (via cadherin domains) with both alpha and beta isoforms of neurexins. As to expression, by 48 hours post-fertilization (hpf), widely expressed in the brain, with strong expression in the telencephalon and the midbrain. Not expressed in the optic tectum.

It localises to the postsynaptic cell membrane. The protein resides in the endoplasmic reticulum membrane. The protein localises to the golgi apparatus membrane. Functionally, synaptic adhesion molecule. Promotes synapse development by acting as a cell adhesion molecule at the postsynaptic membrane, which associates with presynaptic neurexins. This is Calsyntenin-3 from Danio rerio (Zebrafish).